The chain runs to 282 residues: MRNKLSFDLQLSARKAAIAERIAAHKIARSKVSVFLMAMSAGVFMAIGFTFYLSVIADAPSSQALTHLVGGLCFTLGFILLAVCGTSLFTSSVMTVMAKSRGVISWRTWLINALLVACGNLAGIACFSLLIWFSGLVMSENAMWGVAVLHCAEGKMHHTFTESVSLGIMCNLMVCLALWMSYCGRSLCDKIVAMILPITLFVASGFEHCIANLFVIPFAIAIRHFAPPPFWQLAHSSADNFPALTVSHFITANLLPVMLGNIIGGAVLVSMCYRAIYLRQEP.

The Cytoplasmic segment spans residues 1-35 (MRNKLSFDLQLSARKAAIAERIAAHKIARSKVSVF). Residues 36 to 56 (LMAMSAGVFMAIGFTFYLSVI) form a helical membrane-spanning segment. The Periplasmic segment spans residues 57-68 (ADAPSSQALTHL). The chain crosses the membrane as a helical span at residues 69–89 (VGGLCFTLGFILLAVCGTSLF). Over 90–112 (TSSVMTVMAKSRGVISWRTWLIN) the chain is Cytoplasmic. A helical transmembrane segment spans residues 113-133 (ALLVACGNLAGIACFSLLIWF). Over 134 to 163 (SGLVMSENAMWGVAVLHCAEGKMHHTFTES) the chain is Periplasmic. A helical transmembrane segment spans residues 164-184 (VSLGIMCNLMVCLALWMSYCG). Residues 185 to 190 (RSLCDK) are Cytoplasmic-facing. The chain crosses the membrane as a helical span at residues 191-211 (IVAMILPITLFVASGFEHCIA). Residues 212 to 248 (NLFVIPFAIAIRHFAPPPFWQLAHSSADNFPALTVSH) lie on the Periplasmic side of the membrane. Residues 249–269 (FITANLLPVMLGNIIGGAVLV) traverse the membrane as a helical segment. Over 270 to 282 (SMCYRAIYLRQEP) the chain is Cytoplasmic.

Belongs to the FNT transporter (TC 1.A.16) family.

The protein resides in the cell inner membrane. The enzyme catalyses formate(in) = formate(out). Its activity is regulated as follows. The direction of formate translocation depends on external pH and electron donor source. In terms of biological role, involved in the bidirectional transport of formate during mixed-acid fermentation. The chain is Formate channel FocB from Escherichia coli (strain K12).